A 91-amino-acid polypeptide reads, in one-letter code: MNIKLFCFLSILISLTGLSLSGDDGNYPIDANGNRYSCGKLGENEFCLKVCKLHGVKRGYCYFFKCYCELLKDKDIQFFDAYKTYCKNSRI.

An N-terminal signal peptide occupies residues Met1–Ser21. Residues Asp23–Lys87 form the LCN-type CS-alpha/beta domain. Cystine bridges form between Cys38–Cys61, Cys47–Cys66, and Cys51–Cys68.

The protein belongs to the long (3 C-C) scorpion toxin superfamily. Heterodimer of this alpha chain and a beta chain (AC D9U2A2). As to expression, expressed by the venom gland.

It localises to the secreted. In terms of biological role, the heterodimer LVP1 induces lipolysis in rat adipocytes. Induction of lipolysis by LVP1 appears to be mediated through the beta-2 adrenergic receptor pathway (ADRB2). The sequence is that of Lipolysis-activating peptide 1-alpha chain from Lychas mucronatus (Chinese swimming scorpion).